A 322-amino-acid polypeptide reads, in one-letter code: Ubiquinone biosynthesis O-methyltransferase, mitochondrial (322 aa).

The transit peptide at 1–37 directs the protein to the mitochondrion; it reads MLASVRVNQLQRLLLSARRLSSSPIIPPSRLLHQRLF. The tract at residues 46–75 is disordered; that stretch reads AASFSSSHPKIQTLEGKASNKSRSTSSTTS. S-adenosyl-L-methionine contacts are provided by R108, G139, D160, and L205. Mg(2+) is bound by residues E206, E209, and H210.

The protein belongs to the class I-like SAM-binding methyltransferase superfamily. UbiG/COQ3 family. Component of a multi-subunit COQ enzyme complex. Requires Mg(2+) as cofactor.

It localises to the mitochondrion inner membrane. The enzyme catalyses a 3,4-dihydroxy-5-(all-trans-polyprenyl)benzoate + S-adenosyl-L-methionine = a 4-hydroxy-3-methoxy-5-(all-trans-polyprenyl)benzoate + S-adenosyl-L-homocysteine + H(+). It catalyses the reaction a 3-demethylubiquinone + S-adenosyl-L-methionine = a ubiquinone + S-adenosyl-L-homocysteine. The catalysed reaction is a 3-demethylubiquinol + S-adenosyl-L-methionine = a ubiquinol + S-adenosyl-L-homocysteine + H(+). It functions in the pathway cofactor biosynthesis; ubiquinone biosynthesis. Its function is as follows. O-methyltransferase required for two non-consecutive steps during ubiquinone biosynthesis. Catalyzes the 2 O-methylation of 3,4-dihydroxy-5-(all-trans-polyprenyl)benzoic acid into 4-hydroxy-3-methoxy-5-(all-trans-polyprenyl)benzoic acid. Also catalyzes the last step of ubiquinone biosynthesis by mediating methylation of 3-demethylubiquinone into ubiquinone. Also able to mediate the methylation of 3-demethylubiquinol into ubiquinol. This Arabidopsis thaliana (Mouse-ear cress) protein is Ubiquinone biosynthesis O-methyltransferase, mitochondrial.